A 169-amino-acid polypeptide reads, in one-letter code: Protein-export protein SecB (169 aa).

It belongs to the SecB family. In terms of assembly, homotetramer, a dimer of dimers. One homotetramer interacts with 1 SecA dimer.

Its subcellular location is the cytoplasm. One of the proteins required for the normal export of preproteins out of the cell cytoplasm. It is a molecular chaperone that binds to a subset of precursor proteins, maintaining them in a translocation-competent state. It also specifically binds to its receptor SecA. The sequence is that of Protein-export protein SecB from Haemophilus influenzae (strain PittEE).